We begin with the raw amino-acid sequence, 517 residues long: Acyltransferase AFT15-1 (517 aa).

Catalysis depends on histidine 180, which acts as the Proton acceptor.

This sequence belongs to the plant acyltransferase family.

The protein operates within mycotoxin biosynthesis. Its function is as follows. Acyltransferase; part of the gene clusters that mediate the biosynthesis of the host-selective toxins (HSTs) AF-toxins responsible for Alternaria black spot of strawberry disease by the strawberry pathotype. AF-toxin I and III are valine derivatives of 2,3-dyhydroxy-isovaleric acid and 2-hydroxy-isovaleric acid respectively, while AF II is an isoleucine derivative of 2-hydroxy-valeric acid. These derivatives are bound to a 9,10-epoxy-8-hydroxy-9-methyl-decatrienoic acid (EDA) moiety. On cellular level, AF-toxins affect plasma membrane of susceptible cells and cause a sudden increase in loss of K(+) after a few minutes of toxin treatment. The aldo-keto reductase AFTS1 catalyzes the conversion of 2-keto-isovaleric acid (2-KIV) to 2-hydroxy-isovaleric acid (2-HIV) by reduction of its ketone to an alcohol. The acyl-CoA ligase AFT1, the hydrolase AFT2 and the enoyl-CoA hydratases AFT3 and AFT6, but also the polyketide synthase AFT9, the acyl-CoA dehydrogenase AFT10, the cytochrome P450 monooxygenase AFT11 and the oxidoreductase AFT12 are all involved in the biosynthesis of the AK-, AF- and ACT-toxin common EDA structural moiety. The exact function of each enzyme, and of additional enzymes identified within the AF-toxin clusters have still to be determined. This Alternaria alternata (Alternaria rot fungus) protein is Acyltransferase AFT15-1 (AFT15-1).